A 170-amino-acid polypeptide reads, in one-letter code: MSKLFYAFAVLAVHVLTSSPTTAASNLPVNLVTGPAFTTPAGAAHRRFLRSIHEGEDSLKPSAFSEERTALRAMAYLLKPKQKKLAAALKKSTSKHKLSVAPEKMKSIQVLGDPKNPEREWFKRLYNSKRGDPQTLRKLGQFKTEAQLSRYIKFYDDMLAKAKNVRVQTK.

Positions 1-23 (MSKLFYAFAVLAVHVLTSSPTTA) are cleaved as a signal peptide. The short motif at 47–68 (RFLRSIHEGEDSLKPSAFSEER) is the RxLR-dEER element.

It belongs to the RxLR effector family.

It is found in the secreted. Its subcellular location is the host cytoplasm. It localises to the host nucleus. Functionally, effector that is involved in host plant infection. Contributes to virulence during the early infection stage, by inhibiting plant defense responses induced by both PAMP-triggered immunity (PTI) and effector-triggered immunity (ETI). The protein is RxLR effector protein CRE16 of Phytophthora infestans (strain T30-4) (Potato late blight agent).